A 239-amino-acid chain; its full sequence is tRNA (guanine-N(7)-)-methyltransferase (239 aa).

Positions 69, 94, 121, and 144 each coordinate S-adenosyl-L-methionine. Asp-144 is a catalytic residue. Substrate is bound by residues Lys-148, Asp-180, and 217–220 (TKFE).

The protein belongs to the class I-like SAM-binding methyltransferase superfamily. TrmB family. Monomer.

It catalyses the reaction guanosine(46) in tRNA + S-adenosyl-L-methionine = N(7)-methylguanosine(46) in tRNA + S-adenosyl-L-homocysteine. Its pathway is tRNA modification; N(7)-methylguanine-tRNA biosynthesis. Functionally, catalyzes the formation of N(7)-methylguanine at position 46 (m7G46) in tRNA. In Buchnera aphidicola subsp. Acyrthosiphon pisum (strain Tuc7), this protein is tRNA (guanine-N(7)-)-methyltransferase.